Consider the following 275-residue polypeptide: Lycopene elongase/hydratase (275 aa).

9 helical membrane passes run 13–33 (FWLY…TTVG), 38–58 (APAV…LYGI), 84–104 (AAVA…AAPL), 107–127 (EAWP…APPL), 134–154 (VLDS…YAGV), 160–180 (PLLA…FSAI), 203–223 (ALAY…LVDV), 225–245 (FGLL…LQVA), and 253–273 (YPAV…WGVV).

It belongs to the UbiA prenyltransferase family.

It localises to the cell membrane. It catalyses the reaction all-trans-lycopene + dimethylallyl diphosphate + H2O = dihydroisopentenyldehydrorhodopin + diphosphate. The catalysed reaction is isopentenyldehydrorhodopin + dimethylallyl diphosphate + H2O = dihydrobisanhydrobacterioruberin + diphosphate. It functions in the pathway carotenoid biosynthesis. Inhibited by bacterioopsin. Involved in the biosynthesis of the acyclic C50 carotenoid bacterioruberin (BR). Acts as a bifunctional elongase/hydratase that catalyzes the elongation of lycopene by attaching a C(5) isoprene unit at C-2, as well as the hydroxylation of the previous end of the molecule. The enzyme acts at both ends of the substrate, and catalyzes the conversion of lycopene to the C(45) intermediate dihydroisopentenyldehydrorhodopin (DH-IDR) and the conversion of isopentenyldehydrorhodopin (IDR) to the C(50) carotenoid dihydrobisanhydrobacterioruberin (DH-BABR). Can also catalyze the conversion of lycopene to tetrahydrobisanhydrobacterioruberin (TH-BABR). In Halobacterium salinarum (strain ATCC 700922 / JCM 11081 / NRC-1) (Halobacterium halobium), this protein is Lycopene elongase/hydratase.